We begin with the raw amino-acid sequence, 69 residues long: uncharacterized protein (69 aa).

Residues 10 to 64 (IRAFRKLKGYTQEGFAKALGISVSILGEIERGNRLPSAAIIQDAADVLNISADEL) form the HTH cro/C1-type domain. Residues 21–40 (QEGFAKALGISVSILGEIER) constitute a DNA-binding region (H-T-H motif).

This is an uncharacterized protein from Bacillus subtilis (strain 168).